The sequence spans 313 residues: MTLQQIKEIYSRPLTELILQALEIHNKNFGNDIELCSLKSIKTGTCPEDCKYCPQSGHYNTSIEKHKLLDKDSILAEAKNAKDAGSKRFCMGAAWKHIPKKDFDQVAEIITEVKNLGLETCVTLGSINADEATKLKQAGLDYYNHNLDTSREFYPEIITTRKFEERIETIRNVANADINVCCGGILGMGESLDDRFNLLLELLQLPAAPKSIPINTLIPIKGTPLGDKYTNAQIDSFELVRFIATTRILFPQARLRLSAGRENMSLETQTLCFLAGINSIFYGNKLLTENNATVNSDNFLLAKLGLKSNAELC.

Positions 28–258 constitute a Radical SAM core domain; the sequence is NFGNDIELCS…LFPQARLRLS (231 aa). Residues cysteine 46, cysteine 50, and cysteine 53 each coordinate [4Fe-4S] cluster. Residues cysteine 90, cysteine 121, cysteine 181, and arginine 256 each contribute to the [2Fe-2S] cluster site.

This sequence belongs to the radical SAM superfamily. Biotin synthase family. In terms of assembly, homodimer. It depends on [4Fe-4S] cluster as a cofactor. [2Fe-2S] cluster serves as cofactor.

The catalysed reaction is (4R,5S)-dethiobiotin + (sulfur carrier)-SH + 2 reduced [2Fe-2S]-[ferredoxin] + 2 S-adenosyl-L-methionine = (sulfur carrier)-H + biotin + 2 5'-deoxyadenosine + 2 L-methionine + 2 oxidized [2Fe-2S]-[ferredoxin]. It participates in cofactor biosynthesis; biotin biosynthesis; biotin from 7,8-diaminononanoate: step 2/2. Functionally, catalyzes the conversion of dethiobiotin (DTB) to biotin by the insertion of a sulfur atom into dethiobiotin via a radical-based mechanism. The polypeptide is Biotin synthase (Francisella tularensis subsp. tularensis (strain FSC 198)).